A 258-amino-acid chain; its full sequence is Phosphate import ATP-binding protein PstB 2 (258 aa).

The region spanning 12–253 (IQVRDLNFYY…PQQKQTEDYI (242 aa)) is the ABC transporter domain. ATP is bound at residue 44-51 (GPSGCGKS).

The protein belongs to the ABC transporter superfamily. Phosphate importer (TC 3.A.1.7) family. As to quaternary structure, the complex is composed of two ATP-binding proteins (PstB), two transmembrane proteins (PstC and PstA) and a solute-binding protein (PstS).

The protein localises to the cell inner membrane. It carries out the reaction phosphate(out) + ATP + H2O = ADP + 2 phosphate(in) + H(+). Its function is as follows. Part of the ABC transporter complex PstSACB involved in phosphate import. Responsible for energy coupling to the transport system. This is Phosphate import ATP-binding protein PstB 2 from Yersinia pestis bv. Antiqua (strain Nepal516).